The sequence spans 176 residues: Cytochrome c-552 (176 aa).

The helical; Signal-anchor transmembrane segment at 12 to 32 threads the bilayer; sequence GALIGSLLFLLLMSWAASGIF. Heme c contacts are provided by cysteine 90, cysteine 93, histidine 94, methionine 126, and methionine 154.

Binds 1 heme c group covalently per subunit.

Its subcellular location is the cell membrane. In terms of biological role, mediates the electron transport between the cytochrome bc1 complex and cytochrome-c oxidase. The chain is Cytochrome c-552 (cycM) from Paracoccus denitrificans.